A 550-amino-acid polypeptide reads, in one-letter code: Probable endochitinase (550 aa).

Positions 1–16 (MLHYLATILWLAVAHA) are cleaved as a signal peptide. 2 N-linked (GlcNAc...) asparagine; by host glycosylation sites follow: Asn-146 and Asn-172. Residues 147 to 547 (KTVAAYFVEW…NAMNERVRVK (401 aa)) enclose the GH18 domain. Glu-304 acts as the Proton donor in catalysis. Residue Asn-344 is glycosylated (N-linked (GlcNAc...) asparagine; by host). A Prevents secretion from ER motif is present at residues 547–550 (KDEL).

This sequence belongs to the glycosyl hydrolase 18 family. Chitinase class II subfamily.

The protein resides in the host endoplasmic reticulum lumen. It carries out the reaction Random endo-hydrolysis of N-acetyl-beta-D-glucosaminide (1-&gt;4)-beta-linkages in chitin and chitodextrins.. The polypeptide is Probable endochitinase (Orgyia pseudotsugata (Douglas-fir tussock moth)).